The primary structure comprises 300 residues: Ornithine carbamoyltransferase (300 aa).

Carbamoyl phosphate-binding positions include 50 to 53 (STRT), glutamine 77, arginine 101, and 128 to 131 (HPCQ). Residues asparagine 159, aspartate 219, and 223-224 (SM) each bind L-ornithine. Residues 257–258 (CL) and arginine 285 contribute to the carbamoyl phosphate site.

It belongs to the aspartate/ornithine carbamoyltransferase superfamily. OTCase family.

It is found in the cytoplasm. The enzyme catalyses carbamoyl phosphate + L-ornithine = L-citrulline + phosphate + H(+). It participates in amino-acid degradation; L-arginine degradation via ADI pathway; carbamoyl phosphate from L-arginine: step 2/2. Its function is as follows. Reversibly catalyzes the transfer of the carbamoyl group from carbamoyl phosphate (CP) to the N(epsilon) atom of ornithine (ORN) to produce L-citrulline. The protein is Ornithine carbamoyltransferase of Haloquadratum walsbyi (strain DSM 16790 / HBSQ001).